The chain runs to 291 residues: HTH-type transcriptional activator AmpR (291 aa).

The region spanning 6 to 63 (LPLNSLRAFEAAARHLSFTHAAIELNVTHSAISQHVKTLEQHLNCQLFVRVSRGLMLT) is the HTH lysR-type domain. A DNA-binding region (H-T-H motif) is located at residues 23–42 (FTHAAIELNVTHSAISQHVK).

This sequence belongs to the LysR transcriptional regulatory family.

It is found in the cytoplasm. Functionally, this protein is a positive regulator of gene expression of cephalosporinase (AmpC). This chain is HTH-type transcriptional activator AmpR (ampR), found in Enterobacter cloacae.